A 370-amino-acid polypeptide reads, in one-letter code: Galactose-1-phosphate uridylyltransferase (370 aa).

Zn(2+)-binding residues include cysteine 51 and cysteine 54. UDP-alpha-D-glucose-binding positions include alanine 60 and 76–77 (NG). Histidine 121 is a binding site for Zn(2+). Asparagine 166 is a UDP-alpha-D-glucose binding site. Residue histidine 177 coordinates Zn(2+). Histidine 179 serves as the catalytic Tele-UMP-histidine intermediate. UDP-alpha-D-glucose is bound at residue glutamine 181. Fe cation-binding residues include glutamate 195, histidine 294, histidine 311, and histidine 313. UDP-alpha-D-glucose is bound by residues 326–329 (KFLV) and 331–332 (FE).

This sequence belongs to the galactose-1-phosphate uridylyltransferase type 1 family. As to quaternary structure, homodimer. The cofactor is Zn(2+).

It catalyses the reaction alpha-D-galactose 1-phosphate + UDP-alpha-D-glucose = alpha-D-glucose 1-phosphate + UDP-alpha-D-galactose. It functions in the pathway carbohydrate metabolism; galactose metabolism. The protein is Galactose-1-phosphate uridylyltransferase (GAL7) of Kluyveromyces lactis (strain ATCC 8585 / CBS 2359 / DSM 70799 / NBRC 1267 / NRRL Y-1140 / WM37) (Yeast).